Here is a 393-residue protein sequence, read N- to C-terminus: S-adenosylmethionine decarboxylase proenzyme (393 aa).

Residues E11 and E14 contribute to the active site. S71 (schiff-base intermediate with substrate; via pyruvic acid) is an active-site residue. A Pyruvic acid (Ser); by autocatalysis modification is found at S71. C85 acts as the Proton donor; for catalytic activity in catalysis. Catalysis depends on proton acceptor; for processing activity residues S236 and H249.

The protein belongs to the eukaryotic AdoMetDC family. Pyruvate is required as a cofactor. Is synthesized initially as an inactive proenzyme. Formation of the active enzyme involves a self-maturation process in which the active site pyruvoyl group is generated from an internal serine residue via an autocatalytic post-translational modification. Two non-identical subunits are generated from the proenzyme in this reaction, and the pyruvate is formed at the N-terminus of the alpha chain, which is derived from the carboxyl end of the proenzyme. The post-translation cleavage follows an unusual pathway, termed non-hydrolytic serinolysis, in which the side chain hydroxyl group of the serine supplies its oxygen atom to form the C-terminus of the beta chain, while the remainder of the serine residue undergoes an oxidative deamination to produce ammonia and the pyruvoyl group blocking the N-terminus of the alpha chain.

It catalyses the reaction S-adenosyl-L-methionine + H(+) = S-adenosyl 3-(methylsulfanyl)propylamine + CO2. The protein operates within amine and polyamine biosynthesis; S-adenosylmethioninamine biosynthesis; S-adenosylmethioninamine from S-adenosyl-L-methionine: step 1/1. The polypeptide is S-adenosylmethionine decarboxylase proenzyme (SAMDC) (Hordeum chilense (Barley)).